The sequence spans 142 residues: Large ribosomal subunit protein uL11 (142 aa).

The protein belongs to the universal ribosomal protein uL11 family. As to quaternary structure, part of the ribosomal stalk of the 50S ribosomal subunit. Interacts with L10 and the large rRNA to form the base of the stalk. L10 forms an elongated spine to which L12 dimers bind in a sequential fashion forming a multimeric L10(L12)X complex. Post-translationally, one or more lysine residues are methylated.

Its function is as follows. Forms part of the ribosomal stalk which helps the ribosome interact with GTP-bound translation factors. This chain is Large ribosomal subunit protein uL11, found in Maricaulis maris (strain MCS10) (Caulobacter maris).